Consider the following 476-residue polypeptide: Adenylyl cyclase-associated protein 2 (476 aa).

The tract at residues 223-322 (SILSSGPGLP…KSNSPQKHTP (100 aa)) is disordered. The segment covering 230–247 (GLPPPPPPPPPPGPPPPF) has biased composition (pro residues). A compositionally biased stretch (polar residues) spans 288 to 299 (KNPSLRAQGQIR). Residues serine 300 and serine 308 each carry the phosphoserine modification. Residues 300-317 (SPTKTHTPSPTSPKSNSP) show a composition bias toward low complexity. Residues 317 to 454 (PQKHTPVLEL…QDDDYREFPI (138 aa)) enclose the C-CAP/cofactor C-like domain.

This sequence belongs to the CAP family. In terms of tissue distribution, expressed in the heart, skeletal muscle, and brain.

The protein localises to the cell membrane. In terms of biological role, involved in the regulation of actin polymerization. This chain is Adenylyl cyclase-associated protein 2 (Cap2), found in Mus musculus (Mouse).